A 501-amino-acid polypeptide reads, in one-letter code: MTKILLNTASTVLTRLWKLSLLGLVFAVAAATLVSSRIPTTLEEVKSSGKLIVISRNGPTTYYEGPAGHTGFEYVMAKAFAKHLGVDLEVREIEDLGEMLDKVGTKAGHLAASGLTVTEKRARKVLFAEPYLQVTQQLIYRSGESKPETIEDLYGKRVMVISNSSHSERLKELQREYRDLAWEEQHDVDMLDLLEMVHNGKIDYTIVDSNAYQINRPVYPKATVAFDISEPQDLAWAFPQQKDASLYNEAQKFFKDIKQTGAIDDAMETFYGHLGEIDYSGAILFAHRLQSRLPKWETHLKAAAEKNDLDWQLLAALSYQESHWNPKAKSPTGVRGFMMLTLNTAKEVGVKNRLNAEQSIYGGARYFKSLHGRLPERIKEPDRTWLALAAYNIGLGHLEDARILTEHFGGNPDKWADVKQQLPLLAKRKYYKFTKHGYARGWEAVDYVQNIRNFHTIIAWNEIENQRLQQLAQNENHVSDYAQFSPTVTEAVKSISGTSSL.

A signal peptide spans 1 to 29 (MTKILLNTASTVLTRLWKLSLLGLVFAVA). Positions 30–274 (AATLVSSRIP…DAMETFYGHL (245 aa)) are non-LT domain. Residues 275–501 (GEIDYSGAIL…VKSISGTSSL (227 aa)) are LT domain. Residue Glu321 is part of the active site.

The protein in the N-terminal section; belongs to the bacterial solute-binding protein 3 family. It in the C-terminal section; belongs to the transglycosylase Slt family.

The protein localises to the cell outer membrane. The enzyme catalyses Exolytic cleavage of the (1-&gt;4)-beta-glycosidic linkage between N-acetylmuramic acid (MurNAc) and N-acetylglucosamine (GlcNAc) residues in peptidoglycan, from either the reducing or the non-reducing ends of the peptidoglycan chains, with concomitant formation of a 1,6-anhydrobond in the MurNAc residue.. Functionally, murein-degrading enzyme that degrades murein glycan strands and insoluble, high-molecular weight murein sacculi, with the concomitant formation of a 1,6-anhydromuramoyl product. Lytic transglycosylases (LTs) play an integral role in the metabolism of the peptidoglycan (PG) sacculus. Their lytic action creates space within the PG sacculus to allow for its expansion as well as for the insertion of various structures such as secretion systems and flagella. The sequence is that of Membrane-bound lytic murein transglycosylase F from Saccharophagus degradans (strain 2-40 / ATCC 43961 / DSM 17024).